Reading from the N-terminus, the 689-residue chain is Glycine--tRNA ligase beta subunit (689 aa).

This sequence belongs to the class-II aminoacyl-tRNA synthetase family. As to quaternary structure, tetramer of two alpha and two beta subunits.

It is found in the cytoplasm. The catalysed reaction is tRNA(Gly) + glycine + ATP = glycyl-tRNA(Gly) + AMP + diphosphate. In Acinetobacter baumannii (strain AB307-0294), this protein is Glycine--tRNA ligase beta subunit.